Reading from the N-terminus, the 170-residue chain is MSLRVVRSVRAVACSLRIALASCPPRPWAPSAAAVRSLRTGSALLSVRKFTEKHEWVTAKDGIGTVGISNFAQEALGDVVYCSLPEVGTKLKKQEEFGALESVKAASELYSPLSGEVTEVNEALAENPGLVNKSCYEDGWLIKMTLSDPSELDELMSEEAYEKYVKSIEE.

The N-terminal 45 residues, 1–45 (MSLRVVRSVRAVACSLRIALASCPPRPWAPSAAAVRSLRTGSALL), are a transit peptide targeting the mitochondrion. Residues 63–145 (IGTVGISNFA…YEDGWLIKMT (83 aa)) form the Lipoyl-binding domain. Lys-104 carries the post-translational modification N6-lipoyllysine.

The protein belongs to the GcvH family. The glycine cleavage system is composed of four proteins: P (GLDC), T (GCST), L (DLD) and H (GCSH). Interacts with GLDC. The cofactor is (R)-lipoate.

The protein resides in the mitochondrion. The glycine cleavage system catalyzes the degradation of glycine. The H protein (GCSH) shuttles the methylamine group of glycine from the P protein (GLDC) to the T protein (GCST). Has a pivotal role in the lipoylation of enzymes involved in cellular energetics such as the mitochondrial dihydrolipoyllysine-residue acetyltransferase component of pyruvate dehydrogenase complex (DLAT), and the mitochondrial dihydrolipoyllysine-residue succinyltransferase component of 2-oxoglutarate dehydrogenase complex (DLST). This chain is Glycine cleavage system H protein, mitochondrial, found in Rattus norvegicus (Rat).